Consider the following 254-residue polypeptide: Autophagy-related protein 5 (254 aa).

Lys102 is covalently cross-linked (Glycyl lysine isopeptide (Lys-Gly) (interchain with G-Cter in ATG12)).

Belongs to the ATG5 family. In terms of assembly, conjugated with ATG12. The ATG5-ATG12 conjugate forms a complex with several units of ATG16. The ATG12-ATG5 conjugate also associates with ATG3. Post-translationally, conjugated to ATG12; which is essential for autophagy. Conjugation with ATG12 involves ATG7 as an E1-like activating enzyme and ATG10 as an E2-like conjugating enzyme.

Its subcellular location is the preautophagosomal structure membrane. Its function is as follows. Involved in cytoplasm to vacuole transport (Cvt) and autophagic vesicle formation. Autophagy is essential for maintenance of amino acid levels and protein synthesis under nitrogen starvation. Required for selective autophagic degradation of the nucleus (nucleophagy). Also required for mitophagy, which eliminates defective or superfluous mitochondria in order to fulfill cellular energy requirements and prevent excess ROS production. Conjugation with ATG12, through a ubiquitin-like conjugating system involving ATG7 as an E1-like activating enzyme and ATG10 as an E2-like conjugating enzyme, is essential for its function. The ATG12-ATG5 conjugate acts as an E3-like enzyme which is required for lipidation of ATG8 and ATG8 association to the vesicle membranes. ATG12-ATG5 rearranges the ATG3 catalytic center and enhances its E2 activity. Autophagy is required for proper vegetative growth, asexual/sexual reproduction, and full virulence. Autophagy is particularly involved in the biosynthesis of deoxynivalenol (DON), an important virulence determinant. This Gibberella zeae (strain ATCC MYA-4620 / CBS 123657 / FGSC 9075 / NRRL 31084 / PH-1) (Wheat head blight fungus) protein is Autophagy-related protein 5.